The chain runs to 810 residues: Glycerol-3-phosphate acyltransferase (810 aa).

The HXXXXD motif signature appears at 305–310 (CHRSHI).

Belongs to the GPAT/DAPAT family.

It localises to the cell inner membrane. It carries out the reaction sn-glycerol 3-phosphate + an acyl-CoA = a 1-acyl-sn-glycero-3-phosphate + CoA. The protein operates within phospholipid metabolism; CDP-diacylglycerol biosynthesis; CDP-diacylglycerol from sn-glycerol 3-phosphate: step 1/3. This Haemophilus influenzae (strain 86-028NP) protein is Glycerol-3-phosphate acyltransferase.